A 112-amino-acid chain; its full sequence is Large ribosomal subunit protein eL30 (112 aa).

The protein belongs to the eukaryotic ribosomal protein eL30 family.

The polypeptide is Large ribosomal subunit protein eL30 (RPL30) (Lupinus luteus (European yellow lupine)).